Consider the following 372-residue polypeptide: Cyclin-J (372 aa).

The 129-residue stretch at 15–143 folds into the Cyclin N-terminal domain; the sequence is DIHQALRYKE…LLETFQWNLC (129 aa).

Belongs to the cyclin family.

The polypeptide is Cyclin-J (CCNJ) (Homo sapiens (Human)).